The following is a 195-amino-acid chain: Probable prefoldin subunit 3 (195 aa).

Belongs to the prefoldin subunit alpha family. In terms of assembly, heterohexamer of two PFD-alpha type and four PFD-beta type subunits.

Its function is as follows. Binds specifically to cytosolic chaperonin (c-CPN) and transfers target proteins to it. Binds to nascent polypeptide chain and promotes folding in an environment in which there are many competing pathways for nonnative proteins. The protein is Probable prefoldin subunit 3 (pfdn3) of Dictyostelium discoideum (Social amoeba).